A 391-amino-acid chain; its full sequence is Phosphoglycerate kinase (391 aa).

Substrate is bound by residues 21 to 23, arginine 36, 59 to 62, arginine 113, and arginine 146; these read DLN and HLGR. ATP-binding positions include lysine 197, glutamate 319, and 345-348; that span reads GGDT.

The protein belongs to the phosphoglycerate kinase family. Monomer.

It is found in the cytoplasm. The catalysed reaction is (2R)-3-phosphoglycerate + ATP = (2R)-3-phospho-glyceroyl phosphate + ADP. It functions in the pathway carbohydrate degradation; glycolysis; pyruvate from D-glyceraldehyde 3-phosphate: step 2/5. In Stenotrophomonas maltophilia (strain R551-3), this protein is Phosphoglycerate kinase.